A 366-amino-acid polypeptide reads, in one-letter code: tRNA 2-selenouridine synthase (366 aa).

A Rhodanese domain is found at 12 to 135 (FLNDVPMMDA…MRTFLLDTLH (124 aa)). The S-selanylcysteine intermediate role is filled by Cys-95.

This sequence belongs to the SelU family. As to quaternary structure, monomer.

It carries out the reaction 5-methylaminomethyl-2-thiouridine(34) in tRNA + selenophosphate + (2E)-geranyl diphosphate + H2O + H(+) = 5-methylaminomethyl-2-selenouridine(34) in tRNA + (2E)-thiogeraniol + phosphate + diphosphate. It catalyses the reaction 5-methylaminomethyl-2-thiouridine(34) in tRNA + (2E)-geranyl diphosphate = 5-methylaminomethyl-S-(2E)-geranyl-thiouridine(34) in tRNA + diphosphate. The catalysed reaction is 5-methylaminomethyl-S-(2E)-geranyl-thiouridine(34) in tRNA + selenophosphate + H(+) = 5-methylaminomethyl-2-(Se-phospho)selenouridine(34) in tRNA + (2E)-thiogeraniol. The enzyme catalyses 5-methylaminomethyl-2-(Se-phospho)selenouridine(34) in tRNA + H2O = 5-methylaminomethyl-2-selenouridine(34) in tRNA + phosphate. In terms of biological role, involved in the post-transcriptional modification of the uridine at the wobble position (U34) of tRNA(Lys), tRNA(Glu) and tRNA(Gln). Catalyzes the conversion of 2-thiouridine (S2U-RNA) to 2-selenouridine (Se2U-RNA). Acts in a two-step process involving geranylation of 2-thiouridine (S2U) to S-geranyl-2-thiouridine (geS2U) and subsequent selenation of the latter derivative to 2-selenouridine (Se2U) in the tRNA chain. This Pseudomonas savastanoi pv. phaseolicola (strain 1448A / Race 6) (Pseudomonas syringae pv. phaseolicola (strain 1448A / Race 6)) protein is tRNA 2-selenouridine synthase.